The chain runs to 710 residues: Homeobox-leucine zipper protein ROC8 (710 aa).

The segment at 1-23 (MDFGDEPEGSDSQRRRKRYHRHT) is disordered. Residues 14–23 (RRRKRYHRHT) show a composition bias toward basic residues. The homeobox DNA-binding region spans 15–74 (RRKRYHRHTPRQIQQLEAMFKECPHPDENQRAQLSRELGLEPRQIKFWFQNRRTQMKAQH). A coiled-coil region spans residues 82 to 144 (LRAENDKIRC…DRVSNLTSKY (63 aa)). The START domain maps to 197 to 440 (SDMERPMMAE…LQRACERYAS (244 aa)). A compositionally biased stretch (low complexity) spans 630 to 648 (RPGSAAGASTSSAGPLAAA). The tract at residues 630 to 650 (RPGSAAGASTSSAGPLAAARG) is disordered.

Belongs to the HD-ZIP homeobox family. Class IV subfamily.

It localises to the nucleus. Functionally, probable transcription factor. This Oryza sativa subsp. japonica (Rice) protein is Homeobox-leucine zipper protein ROC8 (ROC8).